Here is a 513-residue protein sequence, read N- to C-terminus: GMP synthase [glutamine-hydrolyzing] (513 aa).

Residues 7 to 197 (TILVLDFGGQ…LFGVCGCTGE (191 aa)) enclose the Glutamine amidotransferase type-1 domain. Cys-84 (nucleophile) is an active-site residue. Residues His-171 and Glu-173 contribute to the active site. The GMPS ATP-PPase domain occupies 198-387 (WTMENFIEEQ…LGLPEDIVWR (190 aa)). 225 to 231 (SGGVDSS) contacts ATP.

As to quaternary structure, homodimer.

The catalysed reaction is XMP + L-glutamine + ATP + H2O = GMP + L-glutamate + AMP + diphosphate + 2 H(+). The protein operates within purine metabolism; GMP biosynthesis; GMP from XMP (L-Gln route): step 1/1. Catalyzes the synthesis of GMP from XMP. The polypeptide is GMP synthase [glutamine-hydrolyzing] (Heliobacterium modesticaldum (strain ATCC 51547 / Ice1)).